Here is a 488-residue protein sequence, read N- to C-terminus: MDRKSIESIFNRIRTANCLVIGDLMLDEYLWGKAERISPEAPVQVVDVVREEMRLGGAGNVVNNLVELGAEVTVCSVVGDDDNGQALLEAFGRRGVATDAIFLDATRRTSRKTRVVAAHQQIVRIDRESRVPLSAEVERRVSDWITANAGGFDVILLSDYQKGVLTPGVISATLAAARPGAIPVLVDPKGTDFSRYSGATLLTPNRREAEAASGIAIHDIESLVRAAGVIMERVGLEHLLITRSEEGMSLFSRSAAPMHIPTVAREVFDVSGAGDTVLASLAAGMAAGMEMIEAARLANITAGIAVAKLGTSTVAPAEIINAVALAHSDSDSKIKNRDVLAVLIEAEKARGKRIVFTNGCFDLLHAGHVKYLQKARTLGDLLVLGLNSDASVRRLKGEKRPLIGEQERAHILAALDCIDYVVIFEEDTPLELIAALKPHILAKGGDYTPEGVVGRELVESYGGRVELVSFVDGKSTTNIIERVLERYS.

A ribokinase region spans residues 1–330; that stretch reads MDRKSIESIF…NAVALAHSDS (330 aa). 205–208 serves as a coordination point for ATP; it reads NRRE. Asp275 is an active-site residue. The tract at residues 356 to 488 is cytidylyltransferase; sequence FTNGCFDLLH…IIERVLERYS (133 aa).

The protein in the N-terminal section; belongs to the carbohydrate kinase PfkB family. It in the C-terminal section; belongs to the cytidylyltransferase family. As to quaternary structure, homodimer.

The catalysed reaction is D-glycero-beta-D-manno-heptose 7-phosphate + ATP = D-glycero-beta-D-manno-heptose 1,7-bisphosphate + ADP + H(+). The enzyme catalyses D-glycero-beta-D-manno-heptose 1-phosphate + ATP + H(+) = ADP-D-glycero-beta-D-manno-heptose + diphosphate. It participates in nucleotide-sugar biosynthesis; ADP-L-glycero-beta-D-manno-heptose biosynthesis; ADP-L-glycero-beta-D-manno-heptose from D-glycero-beta-D-manno-heptose 7-phosphate: step 1/4. The protein operates within nucleotide-sugar biosynthesis; ADP-L-glycero-beta-D-manno-heptose biosynthesis; ADP-L-glycero-beta-D-manno-heptose from D-glycero-beta-D-manno-heptose 7-phosphate: step 3/4. Catalyzes the phosphorylation of D-glycero-D-manno-heptose 7-phosphate at the C-1 position to selectively form D-glycero-beta-D-manno-heptose-1,7-bisphosphate. Functionally, catalyzes the ADP transfer from ATP to D-glycero-beta-D-manno-heptose 1-phosphate, yielding ADP-D-glycero-beta-D-manno-heptose. This is Bifunctional protein HldE from Pelobacter propionicus (strain DSM 2379 / NBRC 103807 / OttBd1).